Consider the following 407-residue polypeptide: uncharacterized protein (407 aa).

12 consecutive transmembrane segments (helical) span residues 22-42 (IVSV…PLAV), 51-71 (LGFS…ATLA), 101-121 (ALLL…VLLV), 126-146 (VLGI…IGRV), 154-174 (VISW…PVGV), 179-199 (ALIP…GYYL), 227-247 (GLGL…ITLY), 258-278 (LSLT…ANTI), 286-306 (VAIV…LAPV), 309-329 (VALV…PALG), 347-367 (AYSV…GYVA), and 369-389 (AFGY…GVAL).

This sequence belongs to the major facilitator superfamily. YhhS family.

It localises to the cell inner membrane. This is an uncharacterized protein from Burkholderia pseudomallei (strain 1106a).